Reading from the N-terminus, the 243-residue chain is Carboxy-S-adenosyl-L-methionine synthase (243 aa).

S-adenosyl-L-methionine contacts are provided by residues Tyr-40, 65–67 (GCS), 90–91 (DN), 118–119 (DI), Asn-133, and Arg-200.

It belongs to the class I-like SAM-binding methyltransferase superfamily. Cx-SAM synthase family. In terms of assembly, homodimer.

It carries out the reaction prephenate + S-adenosyl-L-methionine = carboxy-S-adenosyl-L-methionine + 3-phenylpyruvate + H2O. In terms of biological role, catalyzes the conversion of S-adenosyl-L-methionine (SAM) to carboxy-S-adenosyl-L-methionine (Cx-SAM). This is Carboxy-S-adenosyl-L-methionine synthase from Shewanella pealeana (strain ATCC 700345 / ANG-SQ1).